The primary structure comprises 312 residues: Methionyl-tRNA formyltransferase (312 aa).

A (6S)-5,6,7,8-tetrahydrofolate-binding site is contributed by 107 to 110 (SLLP).

Belongs to the Fmt family.

The enzyme catalyses L-methionyl-tRNA(fMet) + (6R)-10-formyltetrahydrofolate = N-formyl-L-methionyl-tRNA(fMet) + (6S)-5,6,7,8-tetrahydrofolate + H(+). In terms of biological role, attaches a formyl group to the free amino group of methionyl-tRNA(fMet). The formyl group appears to play a dual role in the initiator identity of N-formylmethionyl-tRNA by promoting its recognition by IF2 and preventing the misappropriation of this tRNA by the elongation apparatus. The chain is Methionyl-tRNA formyltransferase from Borreliella burgdorferi (strain ZS7) (Borrelia burgdorferi).